A 303-amino-acid chain; its full sequence is Elongation factor Ts (303 aa).

The interval Thr81–Val84 is involved in Mg(2+) ion dislocation from EF-Tu.

Belongs to the EF-Ts family.

The protein localises to the cytoplasm. Associates with the EF-Tu.GDP complex and induces the exchange of GDP to GTP. It remains bound to the aminoacyl-tRNA.EF-Tu.GTP complex up to the GTP hydrolysis stage on the ribosome. In Mesomycoplasma hyopneumoniae (strain 7448) (Mycoplasma hyopneumoniae), this protein is Elongation factor Ts.